A 396-amino-acid chain; its full sequence is Elongation factor Tu (396 aa).

The region spanning 10-206 (KPHVNIGTIG…AVDESVPDPI (197 aa)) is the tr-type G domain. The interval 19–26 (GHVDHGKT) is G1. Residue 19–26 (GHVDHGKT) participates in GTP binding. A Mg(2+)-binding site is contributed by Thr-26. The G2 stretch occupies residues 62-66 (GITIN). Residues 83 to 86 (DAPG) are G3. GTP-binding positions include 83–87 (DAPGH) and 138–141 (NKSD). The interval 138 to 141 (NKSD) is G4. The segment at 176-178 (SGL) is G5.

The protein belongs to the TRAFAC class translation factor GTPase superfamily. Classic translation factor GTPase family. EF-Tu/EF-1A subfamily. As to quaternary structure, monomer.

The protein localises to the cytoplasm. It catalyses the reaction GTP + H2O = GDP + phosphate + H(+). Functionally, GTP hydrolase that promotes the GTP-dependent binding of aminoacyl-tRNA to the A-site of ribosomes during protein biosynthesis. This Renibacterium salmoninarum (strain ATCC 33209 / DSM 20767 / JCM 11484 / NBRC 15589 / NCIMB 2235) protein is Elongation factor Tu.